The sequence spans 657 residues: MSPTPPLFSLPEARTRFTKSTREALNNKNIKPLLSTFSQVPGSENEKKCTLDQAFRGILEEEIINHSSCENVLAIISLAIGGVTEGICTASTPFVLLGDVLDCLPLDQCDTIFTFVEKNVATWKSNTFYSAGKNYLLRMCNDLLRRLSKSQNTVFCGRIQLFLARLFPLSEKSGLNLQSQFNLENVTVFNTNEQESTLGQKHTEDREEGMDVEEGEMGDEEAPTTCSIPIDYNLYRKFWSLQDYFRNPVQCYEKISWKTFLKYSEEVLAVFKSYKLDDTQASRKKMEELKTGGEHVYFAKFLTSEKLMDLQLSDSNFRRHILLQYLILFQYLKGQVKFKSSNYVLTDEQSLWIEDTTKSVYQLLSENPPDGERFSKMVEHILNTEENWNSWKNEGCPSFVKERTSDTKPTRIIRKRTAPEDFLGKGPTKKILMGNEELTRLWNLCPDNMEACKSETREHMPTLEEFFEEAIEQADPENMVENEYKAVNNSNYGWRALRLLARRSPHFFQPTNQQFKSLPEYLENMVIKLAKELPPPSEEIKTGEDEDEEDNDALLKENESPDVRRDKPVTGEQIEVFANKLGEQWKILAPYLEMKDSEIRQIECDSEDMKMRAKQLLVAWQDQEGVHATPENLINALNKSGLSDLAESLTNDNETNS.

At methionine 1 the chain carries N-acetylmethionine. The residue at position 2 (serine 2) is a Phosphoserine. Threonine 4 is subject to Phosphothreonine. Residue lysine 31 forms a Glycyl lysine isopeptide (Lys-Gly) (interchain with G-Cter in SUMO2) linkage. The residue at position 133 (lysine 133) is an N6-acetyllysine. The segment at 133 to 167 (KNYLLRMCNDLLRRLSKSQNTVFCGRIQLFLARLF) is dock domain; interaction with THOC2. Residues 194-222 (QESTLGQKHTEDREEGMDVEEGEMGDEEA) form a disordered region. The span at 206 to 222 (REEGMDVEEGEMGDEEA) shows a compositional bias: acidic residues. A dock domain; interaction with THOC2 region spans residues 227–397 (SIPIDYNLYR…WNSWKNEGCP (171 aa)). At lysine 300 the chain carries N6-acetyllysine. Lysine 408 participates in a covalent cross-link: Glycyl lysine isopeptide (Lys-Gly) (interchain with G-Cter in SUMO2). The Nuclear localization signal signature appears at 414–430 (RKRTAPEDFLGKGPTKK). The segment at 533-569 (LPPPSEEIKTGEDEDEEDNDALLKENESPDVRRDKPV) is disordered. A Phosphoserine modification is found at serine 537. Threonine 542 carries the post-translational modification Phosphothreonine. The span at 553–569 (ALLKENESPDVRRDKPV) shows a compositional bias: basic and acidic residues. At serine 560 the chain carries Phosphoserine. A Death domain is found at 570–653 (TGEQIEVFAN…DLAESLTNDN (84 aa)). Lysine 580 is covalently cross-linked (Glycyl lysine isopeptide (Lys-Gly) (interchain with G-Cter in SUMO2)). Residue lysine 595 forms a Glycyl lysine isopeptide (Lys-Gly) (interchain with G-Cter in SUMO1); alternate linkage. Lysine 595 is covalently cross-linked (Glycyl lysine isopeptide (Lys-Gly) (interchain with G-Cter in SUMO2); alternate).

This sequence belongs to the THOC1 family. Component of the THO subcomplex, which is composed of THOC1, THOC2, THOC3, THOC5, THOC6 and THOC7. The THO subcomplex interacts with DDX39B to form the THO-DDX39B complex which multimerizes into a 28-subunit tetrameric assembly. Component of the transcription/export (TREX) complex at least composed of ALYREF/THOC4, DDX39B, SARNP/CIP29, CHTOP and the THO subcomplex; in the complex interacts with THOC2, THOC5 and THOC7. TREX seems to have a dynamic structure involving ATP-dependent remodeling. Binds to the hypophosphorylated form of RB1. Interacts with RNA polymerase II. Interacts with LUZP4. In terms of processing, expression is altered specifically during apoptosis and is accompanied by the appearance of novel forms with smaller apparent molecular mass. Polyubiquitinated, leading to proteasomal degradation; probably involves NEDD4. In terms of tissue distribution, ubiquitous. Expressed in various cancer cell lines. Expressed at very low levels in normal breast epithelial cells and highly expressed in breast tumors. Expression is strongly associated with an aggressive phenotype of breast tumors and expression correlates with tumor size and the metastatic state of the tumor progression.

The protein resides in the nucleus speckle. It localises to the nucleus. Its subcellular location is the nucleoplasm. It is found in the nucleus matrix. The protein localises to the cytoplasm. Component of the THO subcomplex of the TREX complex which is thought to couple mRNA transcription, processing and nuclear export, and which specifically associates with spliced mRNA and not with unspliced pre-mRNA. Required for efficient export of polyadenylated RNA. The THOC1-THOC2-THOC3 core complex alone is sufficient to bind export factor NXF1-NXT1 and promote ATPase activity of DDX39B/UAP56. TREX is recruited to spliced mRNAs by a transcription-independent mechanism, binds to mRNA upstream of the exon-junction complex (EJC) and is recruited in a splicing- and cap-dependent manner to a region near the 5' end of the mRNA where it functions in mRNA export to the cytoplasm via the TAP/NXF1 pathway. Regulates transcriptional elongation of a subset of genes. Involved in genome stability by preventing co-transcriptional R-loop formation. May play a role in hair cell formation, hence may be involved in hearing. Its function is as follows. Participates in an apoptotic pathway which is characterized by activation of caspase-6, increases in the expression of BAK1 and BCL2L1 and activation of NF-kappa-B. This pathway does not require p53/TP53, nor does the presence of p53/TP53 affect the efficiency of cell killing. Activates a G2/M cell cycle checkpoint prior to the onset of apoptosis. Apoptosis is inhibited by association with RB1. Functionally, (Microbial infection) The TREX complex is essential for the export of Kaposi's sarcoma-associated herpesvirus (KSHV) intronless mRNAs and infectious virus production. The sequence is that of THO complex subunit 1 (THOC1) from Homo sapiens (Human).